The primary structure comprises 122 residues: Large ribosomal subunit protein uL14 (122 aa).

The protein belongs to the universal ribosomal protein uL14 family. Part of the 50S ribosomal subunit. Forms a cluster with proteins L3 and L19. In the 70S ribosome, L14 and L19 interact and together make contacts with the 16S rRNA in bridges B5 and B8.

Its function is as follows. Binds to 23S rRNA. Forms part of two intersubunit bridges in the 70S ribosome. This is Large ribosomal subunit protein uL14 from Synechococcus sp. (strain JA-3-3Ab) (Cyanobacteria bacterium Yellowstone A-Prime).